Consider the following 394-residue polypeptide: ATP phosphoribosyltransferase regulatory subunit (394 aa).

It belongs to the class-II aminoacyl-tRNA synthetase family. HisZ subfamily. Heteromultimer composed of HisG and HisZ subunits.

It localises to the cytoplasm. It functions in the pathway amino-acid biosynthesis; L-histidine biosynthesis; L-histidine from 5-phospho-alpha-D-ribose 1-diphosphate: step 1/9. In terms of biological role, required for the first step of histidine biosynthesis. May allow the feedback regulation of ATP phosphoribosyltransferase activity by histidine. The chain is ATP phosphoribosyltransferase regulatory subunit from Pseudomonas paraeruginosa (strain DSM 24068 / PA7) (Pseudomonas aeruginosa (strain PA7)).